A 131-amino-acid polypeptide reads, in one-letter code: ATP synthase epsilon chain (131 aa).

This sequence belongs to the ATPase epsilon chain family. As to quaternary structure, F-type ATPases have 2 components, CF(1) - the catalytic core - and CF(0) - the membrane proton channel. CF(1) has five subunits: alpha(3), beta(3), gamma(1), delta(1), epsilon(1). CF(0) has three main subunits: a, b and c.

Its subcellular location is the cell inner membrane. Its function is as follows. Produces ATP from ADP in the presence of a proton gradient across the membrane. In Helicobacter hepaticus (strain ATCC 51449 / 3B1), this protein is ATP synthase epsilon chain.